The following is a 334-amino-acid chain: Ornithine carbamoyltransferase (334 aa).

Carbamoyl phosphate contacts are provided by residues 57-60 (STRT), glutamine 84, arginine 108, and 135-138 (HPTQ). L-ornithine is bound by residues asparagine 168, aspartate 232, and 236–237 (SM). Carbamoyl phosphate contacts are provided by residues 274-275 (CL) and arginine 321.

This sequence belongs to the aspartate/ornithine carbamoyltransferase superfamily. OTCase family.

It is found in the cytoplasm. It carries out the reaction carbamoyl phosphate + L-ornithine = L-citrulline + phosphate + H(+). Its pathway is amino-acid biosynthesis; L-arginine biosynthesis; L-arginine from L-ornithine and carbamoyl phosphate: step 1/3. In terms of biological role, reversibly catalyzes the transfer of the carbamoyl group from carbamoyl phosphate (CP) to the N(epsilon) atom of ornithine (ORN) to produce L-citrulline. This is Ornithine carbamoyltransferase from Actinobacillus pleuropneumoniae serotype 5b (strain L20).